A 237-amino-acid chain; its full sequence is Ribosomal RNA small subunit methyltransferase G (237 aa).

Residues Gly-78, Phe-83, 129–130 (AE), and Arg-148 contribute to the S-adenosyl-L-methionine site.

The protein belongs to the methyltransferase superfamily. RNA methyltransferase RsmG family.

It localises to the cytoplasm. Its function is as follows. Specifically methylates the N7 position of a guanine in 16S rRNA. The protein is Ribosomal RNA small subunit methyltransferase G of Streptococcus pyogenes serotype M49 (strain NZ131).